A 359-amino-acid polypeptide reads, in one-letter code: Chaperone protein DnaJ (359 aa).

The J domain occupies 3–68; sequence DYYEILGVPK…ERRQTYDRYG (66 aa). A CR-type zinc finger spans residues 128 to 205; it reads GVSKDIKYKI…CAGKGFIEEQ (78 aa). Zn(2+) is bound by residues C141, C144, C157, C160, C179, C182, C193, and C196. 4 CXXCXGXG motif repeats span residues 141-148, 157-164, 179-186, and 193-200; these read CKTCDGTG, CPYCGGSG, CPFCKGSG, and CHDCAGKG.

Belongs to the DnaJ family. As to quaternary structure, homodimer. The cofactor is Zn(2+).

It localises to the cytoplasm. In terms of biological role, participates actively in the response to hyperosmotic and heat shock by preventing the aggregation of stress-denatured proteins and by disaggregating proteins, also in an autonomous, DnaK-independent fashion. Unfolded proteins bind initially to DnaJ; upon interaction with the DnaJ-bound protein, DnaK hydrolyzes its bound ATP, resulting in the formation of a stable complex. GrpE releases ADP from DnaK; ATP binding to DnaK triggers the release of the substrate protein, thus completing the reaction cycle. Several rounds of ATP-dependent interactions between DnaJ, DnaK and GrpE are required for fully efficient folding. Also involved, together with DnaK and GrpE, in the DNA replication of plasmids through activation of initiation proteins. The chain is Chaperone protein DnaJ from Campylobacter hominis (strain ATCC BAA-381 / DSM 21671 / CCUG 45161 / LMG 19568 / NCTC 13146 / CH001A).